A 319-amino-acid polypeptide reads, in one-letter code: MKRIGVLTSGGDSPGMNAAIRAVVRKAIYHGVEVYGIYQGYAGLISGDIRKMELGSVGDIIHRGGTILYTARCEEFKTLEGQKKGIEQLKKFGIEGLVVIGGDGSFAGAQKLTEHGFPTVGVPGTIDNDIPGTDFTIGFDTALNTVIDAIDKIRDTATSHDRTYVIEVMGRNAGDLALWSGLADGAETIVIPEADHDIDQIISRLQRGQERGKKHSIIVVAEGVGSGMDFGREISERTGAETRVTVLGHIQRGGSPTGFDRVLASRLGAKAVDLLLEGQAGVTVGIENNKLVHHDITEVLQRKHSIDLDMYRLSQELSI.

Gly11 lines the ATP pocket. Residue Arg21–Arg25 coordinates ADP. Residues Arg72–Cys73 and Gly102–Ser105 contribute to the ATP site. Position 103 (Asp103) interacts with Mg(2+). Thr125–Asp127 is a binding site for substrate. The active-site Proton acceptor is Asp127. ADP is bound at residue Arg154. Residues Arg162 and Met169–Arg171 each bind substrate. Residues Gly185–Glu187, Arg211, and Lys213–His215 each bind ADP. Residues Glu222, Arg243, and His249–Arg252 contribute to the substrate site.

Belongs to the phosphofructokinase type A (PFKA) family. ATP-dependent PFK group I subfamily. Prokaryotic clade 'B1' sub-subfamily. As to quaternary structure, homotetramer. Requires Mg(2+) as cofactor.

It is found in the cytoplasm. It carries out the reaction beta-D-fructose 6-phosphate + ATP = beta-D-fructose 1,6-bisphosphate + ADP + H(+). Its pathway is carbohydrate degradation; glycolysis; D-glyceraldehyde 3-phosphate and glycerone phosphate from D-glucose: step 3/4. With respect to regulation, allosterically activated by ADP and other diphosphonucleosides, and allosterically inhibited by phosphoenolpyruvate. Catalyzes the phosphorylation of D-fructose 6-phosphate to fructose 1,6-bisphosphate by ATP, the first committing step of glycolysis. This is ATP-dependent 6-phosphofructokinase from Halalkalibacterium halodurans (strain ATCC BAA-125 / DSM 18197 / FERM 7344 / JCM 9153 / C-125) (Bacillus halodurans).